Here is a 533-residue protein sequence, read N- to C-terminus: CWF19-like protein 1 homolog (533 aa).

Residues 290–314 (EMGGAEDGAGNGRKRHNDGGNDGPR) are disordered.

It belongs to the CWF19 family.

The polypeptide is CWF19-like protein 1 homolog (Caenorhabditis elegans).